A 107-amino-acid chain; its full sequence is High mobility group protein HMG-I/HMG-Y (107 aa).

The tract at residues 1–107 (MSESSSKSSQ…ISQESSEEEQ (107 aa)) is disordered. An N-acetylserine modification is found at S2. Position 7 is an N6-acetyllysine (K7). S8 is modified (ADP-ribosylserine). S9 is modified (ADP-ribosylserine; alternate). Residue S9 is modified to Phosphoserine; alternate. Position 15 is an N6-acetyllysine; alternate (K15). A Glycyl lysine isopeptide (Lys-Gly) (interchain with G-Cter in SUMO2); alternate cross-link involves residue K15. A compositionally biased stretch (basic and acidic residues) spans 15–24 (KQEKDGTEKR). The a.T hook 1 DNA-binding region spans 21–31 (TEKRGRGRPRK). Residue R26 is modified to Asymmetric dimethylarginine; alternate. At R26 the chain carries Omega-N-methylarginine; alternate. Position 26 is a symmetric dimethylarginine; alternate (R26). S36 bears the Phosphoserine; by HIPK2 and CDC2 mark. T39 carries the phosphothreonine modification. Phosphoserine occurs at positions 44 and 49. T53 carries the post-translational modification Phosphothreonine; by HIPK2 and CDC2. 2 consecutive DNA-binding regions (a.T hook) follow at residues 53–63 (TPKRPRGRPKG) and 78–89 (APGRKPRGRPKK). Residues 53-77 (TPKRPRGRPKGSKNKGAAKTRKATT) form an interaction with HIPK2 region. The span at 55-74 (KRPRGRPKGSKNKGAAKTRK) shows a compositional bias: basic residues. Residues R58 and R60 each carry the asymmetric dimethylarginine; by PRMT6; alternate modification. Omega-N-methylarginine; by PRMT6; alternate is present on residues R58 and R60. The span at 93-107 (EEEEGISQESSEEEQ) shows a compositional bias: acidic residues. A phosphoserine mark is found at S99, S102, and S103.

Belongs to the HMGA family. In terms of assembly, interacts with HIPK2. In terms of processing, isoforms HMG-I and HMG-Y can be phosphorylated by HIPK2. Phosphorylation may modulate DNA-binding affinity. Methylation at Arg-58 is mutually exclusive with methylation at Arg-60.

Its subcellular location is the nucleus. The protein resides in the chromosome. HMG-I/Y bind preferentially to the minor groove of A+T rich regions in double-stranded DNA. It is suggested that these proteins could function in nucleosome phasing and in the 3'-end processing of mRNA transcripts. They are also involved in the transcription regulation of genes containing, or in close proximity to A+T-rich regions. The protein is High mobility group protein HMG-I/HMG-Y (HMGA1) of Cricetulus griseus (Chinese hamster).